A 240-amino-acid chain; its full sequence is Keratinocyte-associated protein 3 (240 aa).

4 consecutive transmembrane segments (helical) span residues valine 21–glycine 41, valine 63–serine 83, leucine 95–leucine 115, and alanine 163–tyrosine 183.

It belongs to the TMEM54 family.

It localises to the membrane. This chain is Keratinocyte-associated protein 3 (Krtcap3), found in Mus musculus (Mouse).